Consider the following 142-residue polypeptide: Tol-Pal system protein TolR (142 aa).

Topologically, residues 1 to 17 (MARARGRGRRDLKSEIN) are cytoplasmic. The chain crosses the membrane as a helical span at residues 18 to 38 (IVPLLDVLLVLLLIFMATAPI). Residues 39–142 (ITQSVEVDLP…KSVGLMTQPI (104 aa)) lie on the Periplasmic side of the membrane.

Belongs to the ExbD/TolR family. The Tol-Pal system is composed of five core proteins: the inner membrane proteins TolA, TolQ and TolR, the periplasmic protein TolB and the outer membrane protein Pal. They form a network linking the inner and outer membranes and the peptidoglycan layer.

It localises to the cell inner membrane. In terms of biological role, part of the Tol-Pal system, which plays a role in outer membrane invagination during cell division and is important for maintaining outer membrane integrity. Required, with TolQ, for the proton motive force-dependent activation of TolA and for TolA-Pal interaction. The chain is Tol-Pal system protein TolR from Escherichia coli O157:H7.